Reading from the N-terminus, the 713-residue chain is B3 domain-containing transcription factor VAL3 (713 aa).

The segment at residues 328–427 (FEKILSATDT…KLILGFRKAS (100 aa)) is a DNA-binding region (TF-B3). Disordered stretches follow at residues 459-478 (VECS…SKRQ) and 616-713 (LNSD…TSSM). A compositionally biased stretch (basic residues) spans 464–477 (GKKKSSMMITRSKR). The span at 616 to 629 (LNSDNGLHQSANNS) shows a compositional bias: polar residues. Residues 663–674 (TKSETLPHDDTV) show a composition bias toward basic and acidic residues. A compositionally biased stretch (low complexity) spans 676–688 (SSFTSPSSSSAHS). Positions 690-700 (NNKEDEGKLKT) are enriched in basic and acidic residues. Positions 701–713 (TTEIADTTTTSSM) are enriched in low complexity.

It localises to the nucleus. In terms of biological role, may be involved in plant development. The chain is B3 domain-containing transcription factor VAL3 (VAL3) from Arabidopsis thaliana (Mouse-ear cress).